We begin with the raw amino-acid sequence, 265 residues long: S-acyl fatty acid synthase thioesterase, medium chain (265 aa).

Met-1 is subject to N-acetylmethionine. Catalysis depends on residues Ser-101 and His-237.

Belongs to the thioesterase family. As to quaternary structure, interacts (via C-terminus) with FASN. As to expression, detected both in lactating and non-lactating breast epithelium (at protein level). Isoform 2 is up-regulated in bone marrow-derived mononuclear cells of rheumatoid arthritis patients.

It localises to the cytoplasm. It is found in the cytosol. It carries out the reaction (9Z)-octadecenoyl-[ACP] + H2O = (9Z)-octadecenoate + holo-[ACP] + H(+). It catalyses the reaction decanoyl-CoA + H2O = decanoate + CoA + H(+). The catalysed reaction is dodecanoyl-CoA + H2O = dodecanoate + CoA + H(+). The enzyme catalyses tetradecanoyl-CoA + H2O = tetradecanoate + CoA + H(+). It carries out the reaction hexadecanoyl-CoA + H2O = hexadecanoate + CoA + H(+). Functionally, contributes to the release of free fatty acids from fatty acid synthase (FASN). Has broad substrate specificity, giving rise to a range of free fatty acids with chain lengths between 10 and 16 carbon atoms (C10 - C16). The protein is S-acyl fatty acid synthase thioesterase, medium chain of Homo sapiens (Human).